A 903-amino-acid polypeptide reads, in one-letter code: DNA transposase THAP9 (903 aa).

The THAP-type zinc-finger motif lies at 1 to 89 (MTRSCSAVGC…LKKGAVPSVS (89 aa)). Positions 123-126 (DHNY) match the HCFC1-binding motif (HBM) motif.

Active transposase that specifically recognizes the bipartite 5'-TXXGGGX(A/T)-3' consensus motif and mediates transposition. In Homo sapiens (Human), this protein is DNA transposase THAP9 (THAP9).